Reading from the N-terminus, the 225-residue chain is UPF0173 metal-dependent hydrolase Pars_0810 (225 aa).

This sequence belongs to the UPF0173 family.

The sequence is that of UPF0173 metal-dependent hydrolase Pars_0810 from Pyrobaculum arsenaticum (strain DSM 13514 / JCM 11321 / PZ6).